Here is a 282-residue protein sequence, read N- to C-terminus: Protein-export membrane protein SecF (282 aa).

A run of 6 helical transmembrane segments spans residues 9–29 (IAIP…KGIP), 120–140 (EGFK…YLYF), 149–169 (IILS…LLGI), 174–194 (ATIA…ILLT), 214–234 (KTGL…LIVV), and 236–256 (LFIP…LALI).

This sequence belongs to the SecD/SecF family. SecF subfamily. As to quaternary structure, part of the protein translocation apparatus. Forms a complex with SecD.

It is found in the cell membrane. Involved in protein export. This is Protein-export membrane protein SecF from Methanocaldococcus jannaschii (strain ATCC 43067 / DSM 2661 / JAL-1 / JCM 10045 / NBRC 100440) (Methanococcus jannaschii).